The following is a 366-amino-acid chain: tRNA-specific 2-thiouridylase MnmA (366 aa).

ATP-binding positions include 10-17 (GLSGGVDS) and Ile-36. Residue Cys-98 is the Nucleophile of the active site. Cys-98 and Cys-194 form a disulfide bridge. Gly-122 provides a ligand contact to ATP. Residues 144–146 (KDQ) are interaction with tRNA. The Cysteine persulfide intermediate role is filled by Cys-194. The segment at 303–304 (RY) is interaction with tRNA.

It belongs to the MnmA/TRMU family.

It localises to the cytoplasm. The enzyme catalyses S-sulfanyl-L-cysteinyl-[protein] + uridine(34) in tRNA + AH2 + ATP = 2-thiouridine(34) in tRNA + L-cysteinyl-[protein] + A + AMP + diphosphate + H(+). Catalyzes the 2-thiolation of uridine at the wobble position (U34) of tRNA, leading to the formation of s(2)U34. The chain is tRNA-specific 2-thiouridylase MnmA from Chlorobaculum tepidum (strain ATCC 49652 / DSM 12025 / NBRC 103806 / TLS) (Chlorobium tepidum).